A 415-amino-acid polypeptide reads, in one-letter code: Corticotropin-releasing factor receptor 1 (415 aa).

Positions 1-23 (MARHPQLRLVKALLLLGLNPVSA) are cleaved as a signal peptide. Residues 24–111 (SLQDQHCESL…CQEILNEEKK (88 aa)) lie on the Extracellular side of the membrane. Cystine bridges form between Cys-30-Cys-54, Cys-44-Cys-87, and Cys-68-Cys-102. N-linked (GlcNAc...) asparagine glycosylation is found at Asn-38, Asn-78, and Asn-98. An important for peptide agonist binding region spans residues 99–108 (YSECQEILNE). The chain crosses the membrane as a helical span at residues 112 to 142 (SKVHYHVAVIINYLGHCISLVALLVAFVLFL). Residues 143-149 (RLRSIRC) lie on the Cytoplasmic side of the membrane. A helical transmembrane segment spans residues 150 to 174 (LRNIIHWNLISAFILRNATWFVVQL). At 175–189 (TMSPEVHQSNVGWCR) the chain is on the extracellular side. An intrachain disulfide couples Cys-188 to Cys-258. A helical transmembrane segment spans residues 190–218 (LVTAAYNYFHVTNFFWMFGEGCYLHTAIV). Topologically, residues 219 to 225 (LTYSTDR) are cytoplasmic. A helical membrane pass occupies residues 226–253 (LRKWMFICIGWGVPFPIIVAWAIGKLYY). Residues 254-269 (DNEKCWFGKRPGVYTD) lie on the Extracellular side of the membrane. Residues 270–295 (YIYQGPMILVLLINFIFLFNIVRILM) traverse the membrane as a helical segment. Residues 280–290 (LLINFIFLFNI) form an important for antagonist binding region. Residues 296–306 (TKLRASTTSET) are Cytoplasmic-facing. Ser-301 carries the phosphoserine; by PKA modification. A helical transmembrane segment spans residues 307 to 331 (IQYRKAVKATLVLLPLLGITYMLFF). Over 332–338 (VNPGEDE) the chain is Extracellular. A helical membrane pass occupies residues 339 to 368 (VSRVVFIYFNSFLESFQGFFVSVFYCFLNS). Residues 369 to 415 (EVRSAIRKRWHRWQDKHSIRARVARAMSIPTSPTRVSFHSIKQSTAV) are Cytoplasmic-facing.

Belongs to the G-protein coupled receptor 2 family. Heterodimer; heterodimerizes with GPER1. Interacts (via N-terminal extracellular domain) with CRH and UCN. Interacts with DLG1; this inhibits endocytosis of CRHR1 after agonist binding. C-terminal Ser or Thr residues may be phosphorylated. In terms of processing, phosphorylation at Ser-301 by PKA prevents maximal coupling to Gq-protein, and thereby negatively regulates downstream signaling. Expressed abundantly in the pituitary, cerebral cortex, hippocampus, amygdala and cerebellum.

The protein resides in the cell membrane. The protein localises to the endosome. Functionally, G-protein coupled receptor for CRH (corticotropin-releasing factor) and UCN (urocortin). Has high affinity for CRH and UCN. Ligand binding causes a conformation change that triggers signaling via guanine nucleotide-binding proteins (G proteins) and down-stream effectors, such as adenylate cyclase. Promotes the activation of adenylate cyclase, leading to increased intracellular cAMP levels. Inhibits the activity of the calcium channel CACNA1H. Required for normal embryonic development of the adrenal gland and for normal hormonal responses to stress. Plays a role in the response to anxiogenic stimuli. This is Corticotropin-releasing factor receptor 1 (CRHR1) from Macaca mulatta (Rhesus macaque).